The sequence spans 249 residues: Eukaryotic translation initiation factor 3 subunit J-A (249 aa).

Residues 1–15 are compositionally biased toward acidic residues; it reads MADADSWDADSFEPE. A disordered region spans residues 1 to 104; sequence MADADSWDAD…DTPLTPEDEL (104 aa). Basic and acidic residues predominate over residues 16 to 27; that stretch reads EPIKKAAVHDKW. The segment covering 28–52 has biased composition (acidic residues); it reads EGEDEDDDVKDNWDDDEEEEKEEEE. The stretch at 34–96 forms a coiled coil; the sequence is DDVKDNWDDD…QQLEETKRDT (63 aa). The segment covering 53–96 has biased composition (basic and acidic residues); it reads EKKTEAKPTEKKKLSEKIKEKENLQRKKQEELRKQQLEETKRDT.

It belongs to the eIF-3 subunit J family. In terms of assembly, component of the eukaryotic translation initiation factor 3 (eIF-3) complex, which is composed of 13 subunits: eif3a, eif3b, eif3c, eif3d, eif3e, eif3f, eif3g, eif3h, eif3i, eif3j, eif3k, eif3l and eif3m.

The protein localises to the cytoplasm. Functionally, component of the eukaryotic translation initiation factor 3 (eIF-3) complex, which is involved in protein synthesis of a specialized repertoire of mRNAs and, together with other initiation factors, stimulates binding of mRNA and methionyl-tRNAi to the 40S ribosome. The eIF-3 complex specifically targets and initiates translation of a subset of mRNAs involved in cell proliferation. This chain is Eukaryotic translation initiation factor 3 subunit J-A (eif3ja), found in Danio rerio (Zebrafish).